We begin with the raw amino-acid sequence, 93 residues long: UPF0728 protein C10orf53 homolog (93 aa).

The protein belongs to the UPF0728 family.

The chain is UPF0728 protein C10orf53 homolog from Bos taurus (Bovine).